A 382-amino-acid polypeptide reads, in one-letter code: Guanine nucleotide-binding protein G(s) subunit alpha (382 aa).

Polar residues predominate over residues 1–14; it reads MGCFGSPTSKQSDV. A disordered region spans residues 1 to 31; sequence MGCFGSPTSKQSDVNSEDSKSQKRRSDAISR. The N-palmitoyl glycine moiety is linked to residue Gly-2. A lipid anchor (S-palmitoyl cysteine) is attached at Cys-3. The segment covering 17-31 has biased composition (basic and acidic residues); that stretch reads EDSKSQKRRSDAISR. One can recognise a G-alpha domain in the interval 42–382; sequence ATHRLLLLGA…RMHLRQYELL (341 aa). The segment at 45-58 is G1 motif; that stretch reads RLLLLGAGESGKST. GTP-binding positions include 50–57, 51–58, 186–192, 211–215, 212–216, 280–283, 281–284, and Ala-354; these read GAGESGKS, AGESGKST, LRCRVLT, DVGGQ, VGGQR, NKQD, and KQDL. Mg(2+)-binding residues include Ser-57 and Thr-192. The G2 motif stretch occupies residues 184–192; that stretch reads DILRCRVLT. The segment at 207–216 is G3 motif; the sequence is FHMFDVGGQR. The G4 motif stretch occupies residues 276–283; it reads ILFLNKQD. Residues 352–357 are G5 motif; the sequence is TCAVDT.

This sequence belongs to the G-alpha family. G(s) subfamily. In terms of assembly, g proteins are composed of 3 units; alpha, beta and gamma. The alpha chain contains the guanine nucleotide binding site.

In terms of biological role, guanine nucleotide-binding proteins (G proteins) are involved as modulators or transducers in various transmembrane signaling systems. The G(s) protein is involved in hormonal regulation of adenylate cyclase: it activates the cyclase. In Drosophila pseudoobscura pseudoobscura (Fruit fly), this protein is Guanine nucleotide-binding protein G(s) subunit alpha (G-salpha60A).